Consider the following 432-residue polypeptide: uncharacterized protein (432 aa).

This is an uncharacterized protein from Methanocaldococcus jannaschii (strain ATCC 43067 / DSM 2661 / JAL-1 / JCM 10045 / NBRC 100440) (Methanococcus jannaschii).